We begin with the raw amino-acid sequence, 190 residues long: MSQLQLLRAQDYPRMPWKNGGGFTEEITRDSGEGLDGFGWRLSIADIEESGGFSTFAGYQRIITVLQGDGMRLLVDGQPSRPLLPFDAFAFSGESQVSCKLLGGAIRDFNLIYAPQRYRARLQWFDGTSRLYSSASTVLLFAASSHVEVSMAGREVQRLGLYDCLRLEGNDELLGLEVQGRFCLIELISR.

To E.coli YdjR.

This is an uncharacterized protein from Pseudomonas putida (Arthrobacter siderocapsulatus).